Reading from the N-terminus, the 1165-residue chain is Protein hsr-9 (1165 aa).

Disordered regions lie at residues 1–26, 70–578, 608–713, and 874–913; these read MASSSNTMEFEEDDSTVTQTSLPTTT, AEDE…TEME, KYSM…IPLK, and TRARKPTTVSNQAKPKGRKKKGVDLVSSRGGSASPAEEEE. Over residues 16–26 the composition is skewed to low complexity; it reads TVTQTSLPTTT. Basic and acidic residues-rich tracts occupy residues 98–114, 123–140, and 149–162; these read KDAKSGESMNDSEKSES, TFEKKIISMDTSDDKLDI, and DTEKPEENEEKVVG. Acidic residues-rich tracts occupy residues 163–179, 211–230, and 280–289; these read DEDEEDIDDVQEDDEDE, EKEEPENEDDTEEPENEVEV, and GESEANEENQ. Residues 306 to 317 are compositionally biased toward polar residues; that stretch reads ATVSSTPSSNTP. A compositionally biased stretch (basic and acidic residues) spans 397–408; it reads NTEHPTEEETPK. Residues 415–431 are compositionally biased toward low complexity; sequence SAASSSATSSAVPTPRS. Residues 446 to 461 are compositionally biased toward basic and acidic residues; the sequence is LQEKETEDPTKTHDTN. The span at 533 to 543 shows a compositional bias: acidic residues; that stretch reads DPIEEADETIE. The segment covering 554 to 563 has biased composition (low complexity); that stretch reads AAKSAPSSSK. Basic and acidic residues-rich tracts occupy residues 662–671 and 694–708; these read KKEEEHHEND and SEASDIKTPPAKKEP. The BRCT domain maps to 923–1028; that stretch reads IGKNIFTGKV…KCVDYTDYVL (106 aa).

In terms of tissue distribution, expressed in germ cells.

Its subcellular location is the nucleus. Functionally, may have a role in DNA double-strand break repair following gamma-irradiation. The sequence is that of Protein hsr-9 from Caenorhabditis elegans.